The primary structure comprises 166 residues: Ribosome maturation factor RimM (166 aa).

The PRC barrel domain maps to 94 to 166 (EGEYYLGKLI…IELKVLDLLK (73 aa)).

The protein belongs to the RimM family. In terms of assembly, binds ribosomal protein uS19.

It is found in the cytoplasm. In terms of biological role, an accessory protein needed during the final step in the assembly of 30S ribosomal subunit, possibly for assembly of the head region. Essential for efficient processing of 16S rRNA. May be needed both before and after RbfA during the maturation of 16S rRNA. It has affinity for free ribosomal 30S subunits but not for 70S ribosomes. In Borreliella burgdorferi (strain ATCC 35210 / DSM 4680 / CIP 102532 / B31) (Borrelia burgdorferi), this protein is Ribosome maturation factor RimM.